We begin with the raw amino-acid sequence, 245 residues long: MAVQISKKRKFVSDGIFKAELNEFLTRELAEDGYSGVEVRVTPTRTEIIILATRTQNVLGEKGRRIRELTAVVQKRFGFPRGSVELYAEKVATRGLCAIAQAESLRYKLLGGLAVRRACYGVLRFIMESGAKGCEVVVSGKLRGQRAKSMKFVDGLMIHSGDPVNYYVDTAVRHVLLRQGVLGIKVKIMLPWDPSGKIGPKKPLPDHVSIVEPKEEILPTTPVSEQKGAKPEVPVMPQGAPVPTA.

Residues 21 to 92 form the KH type-2 domain; that stretch reads LNEFLTRELA…SVELYAEKVA (72 aa). The interval 215–245 is disordered; that stretch reads EEILPTTPVSEQKGAKPEVPVMPQGAPVPTA.

It belongs to the universal ribosomal protein uS3 family.

The protein resides in the cytoplasm. The protein localises to the nucleus. It localises to the nucleolus. Its subcellular location is the mitochondrion inner membrane. It is found in the cytoskeleton. The protein resides in the spindle. The catalysed reaction is 2'-deoxyribonucleotide-(2'-deoxyribose 5'-phosphate)-2'-deoxyribonucleotide-DNA = a 3'-end 2'-deoxyribonucleotide-(2,3-dehydro-2,3-deoxyribose 5'-phosphate)-DNA + a 5'-end 5'-phospho-2'-deoxyribonucleoside-DNA + H(+). Its function is as follows. Component of the small ribosomal subunit. The ribosome is a large ribonucleoprotein complex responsible for the synthesis of proteins in the cell. Has endonuclease activity and plays a role in repair of damaged DNA. Also involved in other processes including regulation of transcription, translation of its cognate mRNA, spindle formation and chromosome movement during mitosis, and apoptosis. The sequence is that of Small ribosomal subunit protein uS3 (rps3) from Ictalurus punctatus (Channel catfish).